Reading from the N-terminus, the 132-residue chain is ATP synthase epsilon chain (132 aa).

This sequence belongs to the ATPase epsilon chain family. In terms of assembly, F-type ATPases have 2 components, CF(1) - the catalytic core - and CF(0) - the membrane proton channel. CF(1) has five subunits: alpha(3), beta(3), gamma(1), delta(1), epsilon(1). CF(0) has three main subunits: a, b and c.

The protein localises to the cell inner membrane. Functionally, produces ATP from ADP in the presence of a proton gradient across the membrane. This is ATP synthase epsilon chain from Cereibacter sphaeroides (strain ATCC 17025 / ATH 2.4.3) (Rhodobacter sphaeroides).